The chain runs to 206 residues: MTMARVLVASRNAKKLAELRRILDDAGVAGVQIVGLDDVPPYDEAPETGATFEENALAKARDGAAATGLPCVADDSGLAVDALNGMPGVLSARWSGTHGDDAANNALLLAQLRDVPDERRGARFVSACALVVPGGTETVVRGEWPGTIGRKPMGEGGFGYDPLFVPDGGDVTAAQLTPAAKDAASHRGRALRHLLPALAALADRTE.

Residue 10 to 15 (SRNAKK) coordinates substrate. Asp75 functions as the Proton acceptor in the catalytic mechanism. Asp75 is a binding site for Mg(2+). Substrate-binding positions include Ser76, 158 to 161 (FGYD), Lys181, and 186 to 187 (HR).

The protein belongs to the HAM1 NTPase family. In terms of assembly, homodimer. Mg(2+) is required as a cofactor.

The catalysed reaction is XTP + H2O = XMP + diphosphate + H(+). It catalyses the reaction dITP + H2O = dIMP + diphosphate + H(+). The enzyme catalyses ITP + H2O = IMP + diphosphate + H(+). In terms of biological role, pyrophosphatase that catalyzes the hydrolysis of nucleoside triphosphates to their monophosphate derivatives, with a high preference for the non-canonical purine nucleotides XTP (xanthosine triphosphate), dITP (deoxyinosine triphosphate) and ITP. Seems to function as a house-cleaning enzyme that removes non-canonical purine nucleotides from the nucleotide pool, thus preventing their incorporation into DNA/RNA and avoiding chromosomal lesions. The chain is dITP/XTP pyrophosphatase from Nocardia farcinica (strain IFM 10152).